The following is a 493-amino-acid chain: Cobyric acid synthase (493 aa).

The GATase cobBQ-type domain occupies Glu255–Trp441. Catalysis depends on Cys336, which acts as the Nucleophile. His433 is an active-site residue.

This sequence belongs to the CobB/CobQ family. CobQ subfamily.

It functions in the pathway cofactor biosynthesis; adenosylcobalamin biosynthesis. Functionally, catalyzes amidations at positions B, D, E, and G on adenosylcobyrinic A,C-diamide. NH(2) groups are provided by glutamine, and one molecule of ATP is hydrogenolyzed for each amidation. This chain is Cobyric acid synthase, found in Synechococcus sp. (strain RCC307).